The sequence spans 541 residues: Arginine--tRNA ligase (541 aa).

A 'HIGH' region motif is present at residues 119-129 (ANPTGPLHIGH).

This sequence belongs to the class-I aminoacyl-tRNA synthetase family. As to quaternary structure, monomer.

The protein resides in the cytoplasm. It catalyses the reaction tRNA(Arg) + L-arginine + ATP = L-arginyl-tRNA(Arg) + AMP + diphosphate. This is Arginine--tRNA ligase from Helicobacter pylori (strain HPAG1).